The sequence spans 320 residues: Ribose-phosphate pyrophosphokinase 3 (320 aa).

4 residues coordinate Mg(2+): aspartate 131, histidine 133, aspartate 142, and aspartate 146.

It belongs to the ribose-phosphate pyrophosphokinase family.

It is found in the cytoplasm. The catalysed reaction is D-ribose 5-phosphate + ATP = 5-phospho-alpha-D-ribose 1-diphosphate + AMP + H(+). Its pathway is metabolic intermediate biosynthesis; 5-phospho-alpha-D-ribose 1-diphosphate biosynthesis; 5-phospho-alpha-D-ribose 1-diphosphate from D-ribose 5-phosphate (route I): step 1/1. 5-phosphoribose 1-diphosphate synthase involved in nucleotide, histidine, and tryptophan biosynthesis. Active in heteromultimeric complexes with other 5-phosphoribose 1-diphosphate synthases (PRS2, PRS3, PRS4 and PRS5). This chain is Ribose-phosphate pyrophosphokinase 3 (PRS3), found in Saccharomyces cerevisiae (strain ATCC 204508 / S288c) (Baker's yeast).